A 280-amino-acid polypeptide reads, in one-letter code: Putative pyruvate, phosphate dikinase regulatory protein (280 aa).

154–161 (GVSRTSKT) contacts ADP.

Belongs to the pyruvate, phosphate/water dikinase regulatory protein family. PDRP subfamily.

It catalyses the reaction N(tele)-phospho-L-histidyl/L-threonyl-[pyruvate, phosphate dikinase] + ADP = N(tele)-phospho-L-histidyl/O-phospho-L-threonyl-[pyruvate, phosphate dikinase] + AMP + H(+). The enzyme catalyses N(tele)-phospho-L-histidyl/O-phospho-L-threonyl-[pyruvate, phosphate dikinase] + phosphate + H(+) = N(tele)-phospho-L-histidyl/L-threonyl-[pyruvate, phosphate dikinase] + diphosphate. Bifunctional serine/threonine kinase and phosphorylase involved in the regulation of the pyruvate, phosphate dikinase (PPDK) by catalyzing its phosphorylation/dephosphorylation. The chain is Putative pyruvate, phosphate dikinase regulatory protein from Nitrobacter winogradskyi (strain ATCC 25391 / DSM 10237 / CIP 104748 / NCIMB 11846 / Nb-255).